The chain runs to 692 residues: Putative clathrin assembly protein At1g14910 (692 aa).

An ENTH domain is found at 24-161; it reads RVNSDYAELD…ECFRVLKYDI (138 aa). Residues 325-383 form a disordered region; the sequence is YTPDDGLTSEDVGPSHEEHETSSPSDSAVVPSEETQLSSQSPPSVETPQNFIDTDDLLG. The span at 357-376 shows a compositional bias: polar residues; that stretch reads EETQLSSQSPPSVETPQNFI. Residue Ser-363 is modified to Phosphoserine. The stretch at 532 to 548 is repeat 1; that stretch reads FGEFPIVPVSEPQSTTS. An 8 X 17 AA approximate tandem repeats region spans residues 532–666; the sequence is FGEFPIVPVS…PVSEPQNTTG (135 aa). The stretch at 549-564 is one 2; truncated repeat; sequence FGAFPVPVSEPSNTTG. 6 tandem repeats follow at residues 565–581, 582–598, 599–615, 616–632, 633–649, and 650–666.

In terms of tissue distribution, expressed in the whole plant.

The protein localises to the membrane. It localises to the clathrin-coated pit. It is found in the golgi apparatus. The protein resides in the cytoplasmic vesicle. Its subcellular location is the clathrin-coated vesicle. The polypeptide is Putative clathrin assembly protein At1g14910 (Arabidopsis thaliana (Mouse-ear cress)).